The chain runs to 160 residues: Endoribonuclease YbeY (160 aa).

The Zn(2+) site is built by H125, H129, and H135.

The protein belongs to the endoribonuclease YbeY family. It depends on Zn(2+) as a cofactor.

Its subcellular location is the cytoplasm. Functionally, single strand-specific metallo-endoribonuclease involved in late-stage 70S ribosome quality control and in maturation of the 3' terminus of the 16S rRNA. In Dehalococcoides mccartyi (strain ATCC BAA-2100 / JCM 16839 / KCTC 5957 / BAV1), this protein is Endoribonuclease YbeY.